A 604-amino-acid polypeptide reads, in one-letter code: Microtubule-associated protein 70-4 (604 aa).

The tract at residues 1–33 is disordered; sequence MEERGFMSPSLAISASYREGGSKGMSRRRSMRP. Residues 49-351 adopt a coiled-coil conformation; the sequence is DPVRIELNRL…ADRAAKSEAQ (303 aa). The interval 233–470 is required for targeting to microtubules; the sequence is IIDKMHRQKV…PLNHKSSEGT (238 aa). 2 disordered regions span residues 367 to 422 and 434 to 495; these read LKGP…RSLT and GTSR…NDSV. Over residues 371-385 the composition is skewed to low complexity; sequence TSSSSRGTSVGRSSS. 2 stretches are compositionally biased toward polar residues: residues 401 to 422 and 468 to 478; these read PKIT…RSLT and EGTSRGESPSS. The stretch at 521–569 forms a coiled coil; the sequence is LRDKDEAIEMLAKKVETLTKAMDVEAKKMRREVAVMGKEVAAMRVVDKG.

The protein belongs to the MAP70 family.

Its subcellular location is the cytoplasm. The protein resides in the cytoskeleton. In terms of biological role, plant-specific protein that interact with microtubules. The chain is Microtubule-associated protein 70-4 (MAP70.4) from Arabidopsis thaliana (Mouse-ear cress).